A 293-amino-acid polypeptide reads, in one-letter code: 4-hydroxy-tetrahydrodipicolinate synthase (293 aa).

T45 is a binding site for pyruvate. The active-site Proton donor/acceptor is the Y133. The active-site Schiff-base intermediate with substrate is the K161. Residue I203 participates in pyruvate binding.

This sequence belongs to the DapA family. In terms of assembly, homotetramer; dimer of dimers.

It is found in the cytoplasm. The enzyme catalyses L-aspartate 4-semialdehyde + pyruvate = (2S,4S)-4-hydroxy-2,3,4,5-tetrahydrodipicolinate + H2O + H(+). It functions in the pathway amino-acid biosynthesis; L-lysine biosynthesis via DAP pathway; (S)-tetrahydrodipicolinate from L-aspartate: step 3/4. Its function is as follows. Catalyzes the condensation of (S)-aspartate-beta-semialdehyde [(S)-ASA] and pyruvate to 4-hydroxy-tetrahydrodipicolinate (HTPA). The chain is 4-hydroxy-tetrahydrodipicolinate synthase from Pseudoalteromonas atlantica (strain T6c / ATCC BAA-1087).